The sequence spans 204 residues: Ribonuclease HII (204 aa).

Residues Gly-13–Ser-204 enclose the RNase H type-2 domain. Residues Asp-19, Glu-20, and Asp-113 each coordinate a divalent metal cation.

Belongs to the RNase HII family. Requires Mn(2+) as cofactor. Mg(2+) serves as cofactor.

It is found in the cytoplasm. It catalyses the reaction Endonucleolytic cleavage to 5'-phosphomonoester.. Its function is as follows. Endonuclease that specifically degrades the RNA of RNA-DNA hybrids. This Cutibacterium acnes (strain DSM 16379 / KPA171202) (Propionibacterium acnes) protein is Ribonuclease HII.